A 158-amino-acid polypeptide reads, in one-letter code: Pyruvoyl-dependent arginine decarboxylase (158 aa).

Ser44 carries the post-translational modification Pyruvic acid (Ser).

Belongs to the PdaD family. Requires pyruvate as cofactor.

It carries out the reaction L-arginine + H(+) = agmatine + CO2. The polypeptide is Pyruvoyl-dependent arginine decarboxylase (Pyrococcus horikoshii (strain ATCC 700860 / DSM 12428 / JCM 9974 / NBRC 100139 / OT-3)).